The primary structure comprises 260 residues: 3-alpha-(or 20-beta)-hydroxysteroid dehydrogenase (260 aa).

Positions 17, 19, 38, 61, 62, 88, 153, 157, 186, 188, and 191 each coordinate NAD(+). Tyr153 (proton acceptor) is an active-site residue.

It belongs to the short-chain dehydrogenases/reductases (SDR) family. Homotetramer.

The catalysed reaction is androstan-3alpha,17beta-diol + NAD(+) = 17beta-hydroxyandrostanone + NADH + H(+). It functions in the pathway lipid metabolism; steroid degradation. In terms of biological role, probably involved in steroid metabolism. This chain is 3-alpha-(or 20-beta)-hydroxysteroid dehydrogenase (fabG3), found in Mycobacterium bovis (strain ATCC BAA-935 / AF2122/97).